The sequence spans 336 residues: Fructose-1,6-bisphosphatase class 1 (336 aa).

Residues Glu-90, Asp-112, Leu-114, and Asp-115 each coordinate Mg(2+). Substrate contacts are provided by residues 115 to 118 (DGSS), Asn-211, and Lys-277. A Mg(2+)-binding site is contributed by Glu-283.

It belongs to the FBPase class 1 family. In terms of assembly, homotetramer. Requires Mg(2+) as cofactor.

The protein localises to the cytoplasm. The catalysed reaction is beta-D-fructose 1,6-bisphosphate + H2O = beta-D-fructose 6-phosphate + phosphate. The protein operates within carbohydrate biosynthesis; gluconeogenesis. The polypeptide is Fructose-1,6-bisphosphatase class 1 (Pseudomonas fluorescens (strain Pf0-1)).